Here is a 323-residue protein sequence, read N- to C-terminus: Zinc finger protein 784 (323 aa).

Residues 1 to 26 (MAAARPEAQSRSSPTPESRSQEPLDL) are disordered. The segment covering 9–18 (QSRSSPTPES) has biased composition (polar residues). A Phosphoserine modification is found at Ser-13. 6 consecutive C2H2-type zinc fingers follow at residues 65-87 (FHCA…EHGH), 101-123 (SRCH…YSLH), 129-151 (YRCA…QHRH), 196-218 (FACR…ERVH), 224-246 (YHCG…ARIH), and 252-274 (FRCT…QRTH). The disordered stretch occupies residues 269–323 (KHQRTHFHGPGPGLGDSGGQLGSSAAEGSGSGCGVGDPAEEGRGETAKVKVEADQ). Residues 278 to 289 (PGPGLGDSGGQL) are compositionally biased toward gly residues. Over residues 308-323 (EEGRGETAKVKVEADQ) the composition is skewed to basic and acidic residues. Lys-318 is covalently cross-linked (Glycyl lysine isopeptide (Lys-Gly) (interchain with G-Cter in SUMO2)).

The protein belongs to the krueppel C2H2-type zinc-finger protein family.

The protein localises to the nucleus. Functionally, may be involved in transcriptional regulation. The sequence is that of Zinc finger protein 784 (ZNF784) from Homo sapiens (Human).